A 561-amino-acid polypeptide reads, in one-letter code: Corneodesmosin (561 aa).

An N-terminal signal peptide occupies residues 1–32; that stretch reads MGSSRAPRMGSVGGHGLMALLMAGLILPGILA. 3 disordered regions span residues 41-275, 415-466, and 536-561; these read PCKD…HTVS, GSVS…SSSL, and PLGP…LEKS. A compositionally biased stretch (low complexity) spans 61–99; sequence GSNSISSQGGSSSFSSQGGSSSFSSHGGSSSSQGSSSGS. The segment covering 116-127 has biased composition (gly residues); that stretch reads GSGGSRPGGSGS. Low complexity-rich tracts occupy residues 128-207 and 224-248; these read QSGS…SSGS and TSGM…PCSS. A compositionally biased stretch (polar residues) spans 415–430; the sequence is GSVSSKGPCSGTRIQI. A compositionally biased stretch (low complexity) spans 431–466; that stretch reads TSSSSSTSYHPCSGGPSQGPCSSPGTGSISGGSSSL.

Its subcellular location is the secreted. Its function is as follows. Important for the epidermal barrier integrity. This is Corneodesmosin (Cdsn) from Mus musculus (Mouse).